Here is a 178-residue protein sequence, read N- to C-terminus: NAD(P)H-quinone oxidoreductase subunit J (178 aa).

The protein belongs to the complex I 30 kDa subunit family. As to quaternary structure, NDH-1 can be composed of about 15 different subunits; different subcomplexes with different compositions have been identified which probably have different functions.

Its subcellular location is the cellular thylakoid membrane. It catalyses the reaction a plastoquinone + NADH + (n+1) H(+)(in) = a plastoquinol + NAD(+) + n H(+)(out). It carries out the reaction a plastoquinone + NADPH + (n+1) H(+)(in) = a plastoquinol + NADP(+) + n H(+)(out). In terms of biological role, NDH-1 shuttles electrons from an unknown electron donor, via FMN and iron-sulfur (Fe-S) centers, to quinones in the respiratory and/or the photosynthetic chain. The immediate electron acceptor for the enzyme in this species is believed to be plastoquinone. Couples the redox reaction to proton translocation, and thus conserves the redox energy in a proton gradient. Cyanobacterial NDH-1 also plays a role in inorganic carbon-concentration. The sequence is that of NAD(P)H-quinone oxidoreductase subunit J from Crocosphaera subtropica (strain ATCC 51142 / BH68) (Cyanothece sp. (strain ATCC 51142)).